The primary structure comprises 66 residues: Large ribosomal subunit protein bL35 (66 aa).

The span at 1–26 shows a compositional bias: basic residues; that stretch reads MPKMKTHRGSAKRFKKTASGKLKRGH. The tract at residues 1–28 is disordered; sequence MPKMKTHRGSAKRFKKTASGKLKRGHAY.

It belongs to the bacterial ribosomal protein bL35 family.

In Geobacillus thermodenitrificans (strain NG80-2), this protein is Large ribosomal subunit protein bL35.